The following is an 84-amino-acid chain: Delta-stichotoxin-Sgt3a (84 aa).

The signal sequence occupies residues 1 to 19 (MAYLKIVLVALMLVVAVSA). Residues 20–33 (MRLSDQEDQDISVA) constitute a propeptide that is removed on maturation. Intrachain disulfides connect cysteine 38-cysteine 78, cysteine 40-cysteine 68, and cysteine 61-cysteine 79. A propeptide is located at residue glycine 84.

This sequence belongs to the sea anemone sodium channel inhibitory toxin family. Type II subfamily.

The protein localises to the secreted. The protein resides in the nematocyst. Binds specifically to voltage-gated sodium channels (Nav), thereby delaying their inactivation during signal transduction. The polypeptide is Delta-stichotoxin-Sgt3a (Stichodactyla gigantea (Giant carpet anemone)).